We begin with the raw amino-acid sequence, 70 residues long: Small integral membrane protein 42 (70 aa).

A helical transmembrane segment spans residues 26–46; that stretch reads LVNVLFFFTPLMTLVTLLILV.

It is found in the membrane. This chain is Small integral membrane protein 42, found in Homo sapiens (Human).